Here is a 69-residue protein sequence, read N- to C-terminus: MAESRQTRLQVKCPTCQTAVVWKPENAFRPFCSQRCKLIDLGGWADGKYTVSGQTESLPEISEPDGAYR.

C13, C16, C32, and C36 together coordinate Zn(2+).

It belongs to the DNA gyrase inhibitor YacG family. In terms of assembly, interacts with GyrB. Requires Zn(2+) as cofactor.

In terms of biological role, inhibits all the catalytic activities of DNA gyrase by preventing its interaction with DNA. Acts by binding directly to the C-terminal domain of GyrB, which probably disrupts DNA binding by the gyrase. In Neisseria gonorrhoeae (strain ATCC 700825 / FA 1090), this protein is DNA gyrase inhibitor YacG.